We begin with the raw amino-acid sequence, 526 residues long: Chaperonin GroEL 2 (526 aa).

Positions 50, 413, and 494 each coordinate ATP.

This sequence belongs to the chaperonin (HSP60) family. In terms of assembly, forms a cylinder of 14 subunits composed of two heptameric rings stacked back-to-back. Interacts with the co-chaperonin GroES.

The protein localises to the cytoplasm. The catalysed reaction is ATP + H2O + a folded polypeptide = ADP + phosphate + an unfolded polypeptide.. Its function is as follows. Together with its co-chaperonin GroES, plays an essential role in assisting protein folding. The GroEL-GroES system forms a nano-cage that allows encapsulation of the non-native substrate proteins and provides a physical environment optimized to promote and accelerate protein folding. In Chlamydia pneumoniae (Chlamydophila pneumoniae), this protein is Chaperonin GroEL 2.